The following is a 109-amino-acid chain: MNIEERINIINFDKGNGLIPAVIQDYKSKEVLMLGYMSKESLKKTLEGDTTWFYSRSRRKLWNKGSTSGHFQYIKEIKIDCDNDTILISVNQKGAACHTGNKSCFYRDL.

Asp80 provides a ligand contact to Mg(2+). Residue Cys81 participates in Zn(2+) binding. The Mg(2+) site is built by Asp82 and Asp84. Cys97 and Cys104 together coordinate Zn(2+).

This sequence belongs to the PRA-CH family. Homodimer. Requires Mg(2+) as cofactor. Zn(2+) is required as a cofactor.

Its subcellular location is the cytoplasm. The enzyme catalyses 1-(5-phospho-beta-D-ribosyl)-5'-AMP + H2O = 1-(5-phospho-beta-D-ribosyl)-5-[(5-phospho-beta-D-ribosylamino)methylideneamino]imidazole-4-carboxamide. It functions in the pathway amino-acid biosynthesis; L-histidine biosynthesis; L-histidine from 5-phospho-alpha-D-ribose 1-diphosphate: step 3/9. Catalyzes the hydrolysis of the adenine ring of phosphoribosyl-AMP. The chain is Phosphoribosyl-AMP cyclohydrolase from Clostridium botulinum (strain Alaska E43 / Type E3).